We begin with the raw amino-acid sequence, 296 residues long: MQDRFLKSIAKLPEPLATAIVPLLDKDFAGHIDAQQLAELQAASKMELNELLLALLPIAAALARPPISQFHVGAIAKGKSGDIYMGANIELPGEALFHSVHAEQSAISHAWLSGESIIEDIIVNASPCGHCRQFINELVDGGKVNIHLPDQATAPLSHYLPYAFGPSDLDVTEPLLSKQQQTLTLDSNDPMIIEGLDHAGLSYAPYTKAYASVVLETKDGATYCGRYAENAAFNPSMQPMQMALSTMARHNRDFSEINRAVLIESSKGVISLVGAAMDALHSVAAVELEHIVVEPE.

2 consecutive CMP/dCMP-type deaminase domains span residues 47–167 (ELNE…FGPS) and 186–296 (DSND…VEPE). 88–90 (NIE) provides a ligand contact to substrate. Zn(2+) is bound at residue histidine 101. The active-site Proton donor is glutamate 103. Residues cysteine 128 and cysteine 131 each coordinate Zn(2+).

The protein belongs to the cytidine and deoxycytidylate deaminase family. As to quaternary structure, homodimer. It depends on Zn(2+) as a cofactor.

The catalysed reaction is cytidine + H2O + H(+) = uridine + NH4(+). It catalyses the reaction 2'-deoxycytidine + H2O + H(+) = 2'-deoxyuridine + NH4(+). In terms of biological role, this enzyme scavenges exogenous and endogenous cytidine and 2'-deoxycytidine for UMP synthesis. The polypeptide is Cytidine deaminase (Shewanella pealeana (strain ATCC 700345 / ANG-SQ1)).